Here is a 531-residue protein sequence, read N- to C-terminus: Sterol 26-hydroxylase, mitochondrial (531 aa).

The transit peptide at 1 to 33 (MAALGCARLRWALRGAGRGLCPHGARAKAAIPA) directs the protein to the mitochondrion. Residue lysine 283 is modified to N6-acetyllysine. Residues 384–398 (PLLKAVLKETLRLYP) are sterol-binding. Position 476 (cysteine 476) interacts with heme. An N6-acetyllysine mark is found at lysine 509 and lysine 520.

Belongs to the cytochrome P450 family. As to quaternary structure, interacts with HSP70; this interaction is required for initial targeting to mitochondria. The cofactor is heme. As to expression, expressed in the neural retina and underlying retinal pigment epithelium (at protein level). Expressed in the gray and white matter of cerebellum (at protein level).

The protein resides in the mitochondrion inner membrane. The catalysed reaction is 5beta-cholestane-3alpha,7alpha,12alpha-triol + 6 reduced [adrenodoxin] + 3 O2 + 5 H(+) = (25R)-3alpha,7alpha,12alpha-trihydroxy-5beta-cholestan-26-oate + 6 oxidized [adrenodoxin] + 4 H2O. It carries out the reaction cholestanol + 2 reduced [adrenodoxin] + O2 + 2 H(+) = (25R)-26-hydroxycholestanol + 2 oxidized [adrenodoxin] + H2O. It catalyses the reaction (25R)-3beta-hydroxycholest-5-en-7-one-26-al + 2 reduced [adrenodoxin] + O2 + H(+) = (25R)-3beta-hydroxycholest-5-en-7-one-26-oate + 2 oxidized [adrenodoxin] + H2O. The enzyme catalyses (25R)-3beta,26-dihydroxycholest-5-en-7-one + 2 reduced [adrenodoxin] + O2 + 2 H(+) = (25R)-3beta-hydroxycholest-5-en-7-one-26-al + 2 oxidized [adrenodoxin] + 2 H2O. The catalysed reaction is 7-oxocholesterol + 2 reduced [adrenodoxin] + O2 + 2 H(+) = (25R)-3beta,26-dihydroxycholest-5-en-7-one + 2 oxidized [adrenodoxin] + H2O. It carries out the reaction calciol + 2 reduced [adrenodoxin] + O2 + 2 H(+) = calcidiol + 2 oxidized [adrenodoxin] + H2O. It catalyses the reaction (25R)-5beta-cholestane-3alpha,7alpha,12alpha,26-tetrol + 2 reduced [adrenodoxin] + O2 + 2 H(+) = (25R)-3alpha,7alpha,12alpha-trihydroxy-5beta-cholestan-26-al + 2 oxidized [adrenodoxin] + 2 H2O. The enzyme catalyses 2 reduced [adrenodoxin] + cholesterol + O2 + 2 H(+) = (25R)-cholest-5-ene-3beta,26-diol + 2 oxidized [adrenodoxin] + H2O. The catalysed reaction is (25R)-3beta,4beta-dihydroxycholest-5-en-26-al + 2 reduced [adrenodoxin] + O2 + H(+) = (25R)-3beta,4beta-dihydroxycholest-5-en-26-oate + 2 oxidized [adrenodoxin] + H2O. It carries out the reaction (25R)-4beta,26-dihydroxycholesterol + 2 reduced [adrenodoxin] + O2 + 2 H(+) = (25R)-3beta,4beta-dihydroxycholest-5-en-26-al + 2 oxidized [adrenodoxin] + 2 H2O. It catalyses the reaction 4beta-hydroxycholesterol + 2 reduced [adrenodoxin] + O2 + 2 H(+) = (25R)-4beta,26-dihydroxycholesterol + 2 oxidized [adrenodoxin] + H2O. The enzyme catalyses (25R)-3beta-hydroxy-5-cholesten-26-al + 2 reduced [adrenodoxin] + O2 + H(+) = (25R)-3beta-hydroxy-5-cholestenoate + 2 oxidized [adrenodoxin] + H2O. The catalysed reaction is (25R)-cholest-5-ene-3beta,26-diol + 2 reduced [adrenodoxin] + O2 + 2 H(+) = (25R)-3beta-hydroxy-5-cholesten-26-al + 2 oxidized [adrenodoxin] + 2 H2O. It carries out the reaction (25R)-3alpha,7alpha,12alpha-trihydroxy-5beta-cholestan-26-al + 2 reduced [adrenodoxin] + O2 + H(+) = (25R)-3alpha,7alpha,12alpha-trihydroxy-5beta-cholestan-26-oate + 2 oxidized [adrenodoxin] + H2O. It catalyses the reaction 5beta-cholestane-3alpha,7alpha,12alpha-triol + 2 reduced [adrenodoxin] + O2 + 2 H(+) = (25R)-5beta-cholestane-3alpha,7alpha,12alpha,26-tetrol + 2 oxidized [adrenodoxin] + H2O. It functions in the pathway hormone biosynthesis; cholecalciferol biosynthesis. Its pathway is steroid metabolism; cholesterol degradation. The protein operates within lipid metabolism; bile acid biosynthesis. Cytochrome P450 monooxygenase that catalyzes regio- and stereospecific hydroxylation of cholesterol and its derivatives. Hydroxylates (with R stereochemistry) the terminal methyl group of cholesterol side-chain in a three step reaction to yield at first a C26 alcohol, then a C26 aldehyde and finally a C26 acid. Regulates cholesterol homeostasis by catalyzing the conversion of excess cholesterol to bile acids via both the 'neutral' (classic) and the 'acid' (alternative) pathways. May also regulate cholesterol homeostasis via generation of active oxysterols, which act as ligands for NR1H2 and NR1H3 nuclear receptors, modulating the transcription of genes involved in lipid metabolism. Plays a role in cholestanol metabolism in the cerebellum. Similarly to cholesterol, hydroxylates cholestanol and may facilitate sterol diffusion through the blood-brain barrier to the systemic circulation for further degradation. Also hydroxylates retinal 7-ketocholesterol, a noxious oxysterol with pro-inflammatory and pro-apoptotic effects, and may play a role in its elimination from the retinal pigment epithelium. May play a redundant role in vitamin D biosynthesis. Catalyzes 25-hydroxylation of vitamin D3 that is required for its conversion to a functionally active form. The sequence is that of Sterol 26-hydroxylase, mitochondrial from Homo sapiens (Human).